The chain runs to 354 residues: Protein FAM181A (354 aa).

Basic and acidic residues-rich tracts occupy residues 1–14 and 129–142; these read MPLEERRSSGERND and YLKRGSEDRPRRLL. Disordered stretches follow at residues 1–35, 117–160, and 172–193; these read MPLEERRSSGERNDAAPTNHRRPGEKRASTAKQVS, LPRG…CKEK, and AKEQLPQRQHPEAAQPGQVPMR.

Belongs to the FAM181 family.

The polypeptide is Protein FAM181A (FAM181A) (Homo sapiens (Human)).